The following is a 211-amino-acid chain: Urease accessory protein UreG (211 aa).

Position 11–18 (11–18 (GPVGAGKT)) interacts with GTP.

The protein belongs to the SIMIBI class G3E GTPase family. UreG subfamily. In terms of assembly, homodimer. UreD, UreF and UreG form a complex that acts as a GTP-hydrolysis-dependent molecular chaperone, activating the urease apoprotein by helping to assemble the nickel containing metallocenter of UreC. The UreE protein probably delivers the nickel.

It is found in the cytoplasm. Functionally, facilitates the functional incorporation of the urease nickel metallocenter. This process requires GTP hydrolysis, probably effectuated by UreG. This is Urease accessory protein UreG from Actinobacillus pleuropneumoniae serotype 5b (strain L20).